Consider the following 121-residue polypeptide: Basic phospholipase A2 (121 aa).

7 cysteine pairs are disulfide-bonded: Cys26/Cys114, Cys28/Cys44, Cys43/Cys94, Cys49/Cys121, Cys50/Cys87, Cys57/Cys80, and Cys74/Cys85. Residues Tyr27, Gly29, and Gly31 each coordinate Ca(2+). His47 is an active-site residue. Asp48 contributes to the Ca(2+) binding site. Asp88 is a catalytic residue.

As to quaternary structure, homopentamer. Requires Ca(2+) as cofactor. In terms of tissue distribution, expressed by the venom gland.

It localises to the secreted. It catalyses the reaction a 1,2-diacyl-sn-glycero-3-phosphocholine + H2O = a 1-acyl-sn-glycero-3-phosphocholine + a fatty acid + H(+). Its function is as follows. Snake venom phospholipase A2 (PLA2) that displays moderate myotoxic activity in vivo, and cytotoxic activity in vitro. In vitro, shows anticoagulant activity on human plasma and in mice causes inflammatory cell infiltration and myonecrosis in the gastrocnemius muscles of CD-1 mice 3 hours after injection (100 ug). PLA2 catalyzes the calcium-dependent hydrolysis of the 2-acyl groups in 3-sn-phosphoglycerides. The polypeptide is Basic phospholipase A2 (Porthidium ophryomegas (Slender hognose viper)).